Consider the following 438-residue polypeptide: Ribosomal protein uS12 methylthiotransferase RimO (438 aa).

An MTTase N-terminal domain is found at 5–116 (PTIAISHLGC…IVQVIQRVEN (112 aa)). 6 residues coordinate [4Fe-4S] cluster: Cys14, Cys50, Cys79, Cys154, Cys158, and Cys161. The Radical SAM core domain occupies 140-369 (TTSEGVAYLR…MQIQQPISLQ (230 aa)). Residues 372–438 (CACIGDIVDV…IYDLYGEVIN (67 aa)) form the TRAM domain.

It belongs to the methylthiotransferase family. RimO subfamily. It depends on [4Fe-4S] cluster as a cofactor.

The protein localises to the cytoplasm. The catalysed reaction is L-aspartate(89)-[ribosomal protein uS12]-hydrogen + (sulfur carrier)-SH + AH2 + 2 S-adenosyl-L-methionine = 3-methylsulfanyl-L-aspartate(89)-[ribosomal protein uS12]-hydrogen + (sulfur carrier)-H + 5'-deoxyadenosine + L-methionine + A + S-adenosyl-L-homocysteine + 2 H(+). In terms of biological role, catalyzes the methylthiolation of an aspartic acid residue of ribosomal protein uS12. This is Ribosomal protein uS12 methylthiotransferase RimO from Gloeothece citriformis (strain PCC 7424) (Cyanothece sp. (strain PCC 7424)).